Reading from the N-terminus, the 85-residue chain is U4-theraphotoxin-Hhn1c (85 aa).

Residues 1–22 (MKVTLIAILTCAAVLVLHTTAA) form the signal peptide. Positions 23 to 48 (EELEAESQLMEVGMPDTELAAVDEER) are excised as a propeptide. Disulfide bonds link C52-C66, C56-C77, and C71-C82.

It belongs to the neurotoxin 12 (Hwtx-2) family. 02 (Hwtx-2) subfamily. Expressed by the venom gland.

Its subcellular location is the secreted. Postsynaptic neurotoxin. This chain is U4-theraphotoxin-Hhn1c, found in Cyriopagopus hainanus (Chinese bird spider).